The following is a 623-amino-acid chain: 1-butanol dehydrogenase (quinone) (623 aa).

The first 28 residues, 1 to 28, serve as a signal peptide directing secretion; the sequence is MKKSHAKPFALRAIVVATAAALSLPAAA. 3 residues coordinate Ca(2+): Asp40, Thr43, and Asp46. Position 90 (Glu90) interacts with pyrroloquinoline quinone. Cysteines 134 and 135 form a disulfide. Residues Arg140, Thr184, and 202–204 contribute to the pyrroloquinoline quinone site; that span reads HGS. Glu208 contacts Ca(2+). Residues 235-274 are disordered; that stretch reads HMGRLNGKDSTPTGDPKAPSWPDDPNSPTGKVEAWSQGGG. Ca(2+) is bound by residues Asn295 and Asp345. Asp345 functions as the Proton acceptor in the catalytic mechanism. Arg374 contacts pyrroloquinoline quinone. The segment at 420–440 is disordered; that stretch reads GKPIEKDNRPPQPKEGADKGE. Ala592 contacts pyrroloquinoline quinone.

This sequence belongs to the bacterial PQQ dehydrogenase family. The cofactor is pyrroloquinoline quinone. Ca(2+) is required as a cofactor.

Its subcellular location is the periplasm. The catalysed reaction is butan-1-ol + a quinone = butanal + a quinol. Involved in the metabolism of butane. May function primarily in energy generation. Catalyzes the oxidation of 1-butanol to 1-butanal. Also able to use 2-butanol and butyraldehyde, although the affinity is comparatively low. The protein is 1-butanol dehydrogenase (quinone) of Thauera butanivorans (strain ATCC 43655 / DSM 2080 / JCM 20651 / CCUG 51053 / NBRC 103042 / IAM 12574 / Bu B1211) (Pseudomonas butanovora).